Reading from the N-terminus, the 172-residue chain is MLDAFAKVVAQADARGEFLSNTQLDALSKMVSEGNKRLDVVNRITSNASAIVTNAARALFSEQPQLIQPGGNAYTNRRMAACLRDMEIILRYVSYAIIAGDSSILDDRCLNGLRETYQALGVPGASVAVGIEKMKDSAIAIANDPSGITTGDCSALMAEVGTYFDRAATAVQ.

Residues N35, D39, N72, R77, C82, 82–88 (CLRDMEI), 149–151 (TTG), and C153 contribute to the (2R,3E)-phycocyanobilin site. N4-methylasparagine is present on N72.

It belongs to the phycobiliprotein family. As to quaternary structure, heterodimer of an alpha and a beta subunit. Dimers further assemble into trimers and the trimers into hexamers. The basic functional unit of phycobiliproteins is a ring-shaped hexamer formed from two back-to-back trimers contacting via the alpha chain subunits. The trimers are composed of alpha/beta subunit heterodimers arranged around a three-fold axis of symmetry. The phycoerythrins also contain a gamma subunit which is located in the center of the hexamer. Contains two covalently linked phycocyanobilin chromophores.

It is found in the plastid. It localises to the chloroplast thylakoid membrane. Light-harvesting photosynthetic tetrapyrrole chromophore-protein from the phycobiliprotein complex (phycobilisome, PBS). Phycocyanin is the major phycobiliprotein in the PBS rod. This chain is C-phycocyanin beta chain (cpcB), found in Galdieria sulphuraria (Red alga).